The sequence spans 420 residues: UDP-N-acetylglucosamine 1-carboxyvinyltransferase (420 aa).

Position 22-23 (22-23 (KN)) interacts with phosphoenolpyruvate. R92 provides a ligand contact to UDP-N-acetyl-alpha-D-glucosamine. The Proton donor role is filled by C116. C116 is modified (2-(S-cysteinyl)pyruvic acid O-phosphothioketal). Residues 121 to 125 (RPIDL), D307, and L329 each bind UDP-N-acetyl-alpha-D-glucosamine.

It belongs to the EPSP synthase family. MurA subfamily.

The protein localises to the cytoplasm. It carries out the reaction phosphoenolpyruvate + UDP-N-acetyl-alpha-D-glucosamine = UDP-N-acetyl-3-O-(1-carboxyvinyl)-alpha-D-glucosamine + phosphate. It functions in the pathway cell wall biogenesis; peptidoglycan biosynthesis. Its function is as follows. Cell wall formation. Adds enolpyruvyl to UDP-N-acetylglucosamine. This Nitratiruptor sp. (strain SB155-2) protein is UDP-N-acetylglucosamine 1-carboxyvinyltransferase.